Consider the following 295-residue polypeptide: Pantothenate synthetase (295 aa).

His37 (proton donor) is an active-site residue. Gln61 provides a ligand contact to (R)-pantoate. Position 61 (Gln61) interacts with beta-alanine. 154–157 (GRKD) provides a ligand contact to ATP. A (R)-pantoate-binding site is contributed by Gln160. ATP contacts are provided by residues Val183 and 191 to 194 (QSSR).

It belongs to the pantothenate synthetase family. Homodimer.

The protein localises to the cytoplasm. The catalysed reaction is (R)-pantoate + beta-alanine + ATP = (R)-pantothenate + AMP + diphosphate + H(+). It participates in cofactor biosynthesis; (R)-pantothenate biosynthesis; (R)-pantothenate from (R)-pantoate and beta-alanine: step 1/1. In terms of biological role, catalyzes the condensation of pantoate with beta-alanine in an ATP-dependent reaction via a pantoyl-adenylate intermediate. This is Pantothenate synthetase from Salinibacter ruber (strain DSM 13855 / M31).